Here is a 74-residue protein sequence, read N- to C-terminus: Acyclotide phyb-K (74 aa).

The signal sequence occupies residues 1–24; it reads MARVNSLKCALCFIVLILFVQLNC. A propeptide spanning residues 25 to 43 is cleaved from the precursor; that stretch reads IPETRVMAVELSRVFLQTS. Cystine bridges form between Cys47-Cys64, Cys51-Cys66, and Cys56-Cys71.

In terms of processing, contains 3 disulfide bonds. Expressed in midvein, lamina and periphery of leaves (at protein level).

Its function is as follows. Probably participates in a plant defense mechanism. The protein is Acyclotide phyb-K of Petunia hybrida (Petunia).